Consider the following 366-residue polypeptide: Histidinol-phosphate aminotransferase 2 (366 aa).

N6-(pyridoxal phosphate)lysine is present on lysine 226.

It belongs to the class-II pyridoxal-phosphate-dependent aminotransferase family. Histidinol-phosphate aminotransferase subfamily. In terms of assembly, homodimer. The cofactor is pyridoxal 5'-phosphate.

It catalyses the reaction L-histidinol phosphate + 2-oxoglutarate = 3-(imidazol-4-yl)-2-oxopropyl phosphate + L-glutamate. The protein operates within amino-acid biosynthesis; L-histidine biosynthesis; L-histidine from 5-phospho-alpha-D-ribose 1-diphosphate: step 7/9. This Haemophilus influenzae (strain 86-028NP) protein is Histidinol-phosphate aminotransferase 2.